Here is a 475-residue protein sequence, read N- to C-terminus: UDP-N-acetylmuramate--L-alanine ligase (475 aa).

ATP is bound at residue 125-131 (GTHGKTT).

The protein belongs to the MurCDEF family.

It localises to the cytoplasm. It catalyses the reaction UDP-N-acetyl-alpha-D-muramate + L-alanine + ATP = UDP-N-acetyl-alpha-D-muramoyl-L-alanine + ADP + phosphate + H(+). It participates in cell wall biogenesis; peptidoglycan biosynthesis. Its function is as follows. Cell wall formation. The protein is UDP-N-acetylmuramate--L-alanine ligase of Haemophilus influenzae (strain PittGG).